A 519-amino-acid chain; its full sequence is GTPase Der (519 aa).

Composition is skewed to acidic residues over residues 1–12 (MDVEGAFADEEE) and 30–54 (GYED…PDFG). A disordered region spans residues 1–54 (MDVEGAFADEEELAPHGGWASADFDPAEFGYEDSDDDFDAEDFDETEFSNPDFG). EngA-type G domains follow at residues 81-244 (CTVA…PEEP) and 254-427 (RRVA…DNWD). Residues 87–94 (GRPNVGKS), 134–138 (DTGGW), 196–199 (NKFD), 260–267 (GKPNVGKS), 307–311 (DTAGL), and 372–375 (NKWD) contribute to the GTP site. Residues 428-510 (RRISTGQLNT…PVRIAVRVRE (83 aa)) enclose the KH-like domain.

Belongs to the TRAFAC class TrmE-Era-EngA-EngB-Septin-like GTPase superfamily. EngA (Der) GTPase family. As to quaternary structure, associates with the 50S ribosomal subunit.

GTPase that plays an essential role in the late steps of ribosome biogenesis. The polypeptide is GTPase Der (Corynebacterium glutamicum (strain ATCC 13032 / DSM 20300 / JCM 1318 / BCRC 11384 / CCUG 27702 / LMG 3730 / NBRC 12168 / NCIMB 10025 / NRRL B-2784 / 534)).